A 547-amino-acid polypeptide reads, in one-letter code: Chaperonin GroEL 1 (547 aa).

Residues 30–33, Lys-51, 87–91, Gly-415, and Asp-496 contribute to the ATP site; these read TLGP and DGTTT.

It belongs to the chaperonin (HSP60) family. Forms a cylinder of 14 subunits composed of two heptameric rings stacked back-to-back. Interacts with the co-chaperonin GroES.

The protein resides in the cytoplasm. The catalysed reaction is ATP + H2O + a folded polypeptide = ADP + phosphate + an unfolded polypeptide.. Together with its co-chaperonin GroES, plays an essential role in assisting protein folding. The GroEL-GroES system forms a nano-cage that allows encapsulation of the non-native substrate proteins and provides a physical environment optimized to promote and accelerate protein folding. This Bradyrhizobium sp. (strain BTAi1 / ATCC BAA-1182) protein is Chaperonin GroEL 1.